The primary structure comprises 451 residues: Glucose-6-phosphate isomerase (451 aa).

Glutamate 291 functions as the Proton donor in the catalytic mechanism. Catalysis depends on residues histidine 312 and lysine 426.

Belongs to the GPI family.

It is found in the cytoplasm. The catalysed reaction is alpha-D-glucose 6-phosphate = beta-D-fructose 6-phosphate. It participates in carbohydrate biosynthesis; gluconeogenesis. Its pathway is carbohydrate degradation; glycolysis; D-glyceraldehyde 3-phosphate and glycerone phosphate from D-glucose: step 2/4. Catalyzes the reversible isomerization of glucose-6-phosphate to fructose-6-phosphate. The chain is Glucose-6-phosphate isomerase from Thermoanaerobacter sp. (strain X514).